The sequence spans 147 residues: Myoglobin (147 aa).

The Globin domain occupies 2-141; sequence ADFDAVLKCW…IIADLEANYK (140 aa). Residue H60 coordinates nitrite. Residue H60 coordinates O2. H89 lines the heme b pocket.

The protein belongs to the globin family. As to quaternary structure, monomeric.

The protein resides in the cytoplasm. It localises to the sarcoplasm. The catalysed reaction is Fe(III)-heme b-[protein] + nitric oxide + H2O = Fe(II)-heme b-[protein] + nitrite + 2 H(+). It catalyses the reaction H2O2 + AH2 = A + 2 H2O. In terms of biological role, monomeric heme protein which primary function is to store oxygen and facilitate its diffusion within muscle tissues. Reversibly binds oxygen through a pentacoordinated heme iron and enables its timely and efficient release as needed during periods of heightened demand. Depending on the oxidative conditions of tissues and cells, and in addition to its ability to bind oxygen, it also has a nitrite reductase activity whereby it regulates the production of bioactive nitric oxide. Under stress conditions, like hypoxia and anoxia, it also protects cells against reactive oxygen species thanks to its pseudoperoxidase activity. The sequence is that of Myoglobin (mb) from Thunnus alalunga (Albacore).